The chain runs to 162 residues: Probable E3 ubiquitin-protein ligase XERICO (162 aa).

A helical membrane pass occupies residues 12–28; it reads GMLCVILVNTALSISIV. The segment at 103-145 adopts an RING-type; atypical zinc-finger fold; it reads CSVCLSKFQGDSEINKLKCGHLFHKTCLEKWIDYWNITCPLCR.

Interacts with UBC8 and TULP9. In terms of tissue distribution, ubiquitous. Higher expression in actively growing tissues.

The protein localises to the membrane. The enzyme catalyses S-ubiquitinyl-[E2 ubiquitin-conjugating enzyme]-L-cysteine + [acceptor protein]-L-lysine = [E2 ubiquitin-conjugating enzyme]-L-cysteine + N(6)-ubiquitinyl-[acceptor protein]-L-lysine.. It participates in protein modification; protein ubiquitination. Its function is as follows. Function on abscisic acid homeostasis at post-translational level, probably through ubiquitin/proteasome-dependent substrate-specific degradation. The polypeptide is Probable E3 ubiquitin-protein ligase XERICO (XERICO) (Arabidopsis thaliana (Mouse-ear cress)).